We begin with the raw amino-acid sequence, 601 residues long: Proline--tRNA ligase (601 aa).

Belongs to the class-II aminoacyl-tRNA synthetase family. ProS type 1 subfamily. Homodimer.

It localises to the cytoplasm. It catalyses the reaction tRNA(Pro) + L-proline + ATP = L-prolyl-tRNA(Pro) + AMP + diphosphate. Functionally, catalyzes the attachment of proline to tRNA(Pro) in a two-step reaction: proline is first activated by ATP to form Pro-AMP and then transferred to the acceptor end of tRNA(Pro). As ProRS can inadvertently accommodate and process non-cognate amino acids such as alanine and cysteine, to avoid such errors it has two additional distinct editing activities against alanine. One activity is designated as 'pretransfer' editing and involves the tRNA(Pro)-independent hydrolysis of activated Ala-AMP. The other activity is designated 'posttransfer' editing and involves deacylation of mischarged Ala-tRNA(Pro). The misacylated Cys-tRNA(Pro) is not edited by ProRS. The chain is Proline--tRNA ligase from Tropheryma whipplei (strain TW08/27) (Whipple's bacillus).